Here is an 842-residue protein sequence, read N- to C-terminus: Glucans biosynthesis glucosyltransferase H (842 aa).

The next 7 helical transmembrane spans lie at 140-160 (ILLL…KTIL), 194-214 (ILIL…TALM), 513-533 (VFLT…FLAL), 568-588 (IALF…SIIL), 615-635 (VLLA…AFLG), 656-676 (FMRH…MAWL), and 680-700 (FLFW…VSAI).

It belongs to the glycosyltransferase 2 family. OpgH subfamily.

It localises to the cell inner membrane. It functions in the pathway glycan metabolism; osmoregulated periplasmic glucan (OPG) biosynthesis. Its function is as follows. Involved in the biosynthesis of osmoregulated periplasmic glucans (OPGs). The polypeptide is Glucans biosynthesis glucosyltransferase H (Klebsiella pneumoniae subsp. pneumoniae (strain ATCC 700721 / MGH 78578)).